A 179-amino-acid polypeptide reads, in one-letter code: Adenine phosphoribosyltransferase (179 aa).

The protein belongs to the purine/pyrimidine phosphoribosyltransferase family. Homodimer.

The protein localises to the cytoplasm. The enzyme catalyses AMP + diphosphate = 5-phospho-alpha-D-ribose 1-diphosphate + adenine. It participates in purine metabolism; AMP biosynthesis via salvage pathway; AMP from adenine: step 1/1. In terms of biological role, catalyzes a salvage reaction resulting in the formation of AMP, that is energically less costly than de novo synthesis. The sequence is that of Adenine phosphoribosyltransferase from Mycolicibacterium gilvum (strain PYR-GCK) (Mycobacterium gilvum (strain PYR-GCK)).